A 1791-amino-acid polypeptide reads, in one-letter code: MMVFQSFILGNLVSLCMKIINSVVVVGLYYGFLTTFSIGPSYLFLLRARVMDEGEEGTEKKVSATTGFIAGQLMMFISIYYAPLHLALGRPHTITVLALPYLLFHFFWNNHKHFFDYGSTTRNEMRNLRIQCVFLNNLIFQLFNHFILPSSMLARLVNIYMFRCNNKMLFVTSSFVGWLIGHILFMKWVGLVLVWIQQNHSIRSNRSNVLIRSNKYKFLVSELRNSMARIFSILLFITCVYYLGRIPSPILTKKLKGTSETEERGGTKQDQEVSTEEAPFPSLFSEEREDLDQIDEIDEIRVNAKEQINKDDEFHIRTYYNYNKISENIDGNKENSNLEFLKIKKKEDSVLWFEKPLVTLIFDYKRWNRPNRYIKNDQIENAVRNEMSQYFFSACQSDGKDRISFSYPRNLSTFSEMIQKKIPSFRREKNPSDQFSTCWSLINEEKKENLKKEFLNRIEALDKEWSVEHILEKTTRFCHNETKKEYLPKIYDPFLHGISRGRTQRLFPFQIITKTYLKNPIGGSWINKIHGILLNINYQKFEQTIEKFNRKSSAIKKNLSFFSDPQEEKYKSEEESKIFKFLFDVVIADSNDQTLIKNFMDFHEIHKKVPRWSYKLRSDLEELEGENEETIPLEEPGIRARKAKRVVIFTDTEPHNEIYTNLKNNKNYDQNDEMVLIRYSQQSDFRREIIQGSMRPQRRKTVIWEFFQANMHSPLFFDRIDKFFFFSFDIRGLTKQILRNFMRKNEKKKLDKKDAERSKRKEKGRLKIAEVWDSFFFAQILRGFLLVTQSILRKYILLPLLIIIKNSVRMLLFQIPEWSEDLKDWKREMHVKCTYNRVPLSETEFPRNWLTDGIQIKILFPFYLKPWHKSKFHSSQKGRLKKTKDKGKKKDFCFLTVWGMETELPFGSAHKQPSFFGPISKELKKKMKKYKTKSFQVLRFFKERDKIFLKGAKEIKNWIMKNFVFIKGKRNDLSKGNRIPLLGLREIDELTETKNDSITSNPIIHELSVQNRSMEWKNSSFSENKIKNSIDRINTIRNQIEAISKEKKKITNSCNKPPYDSKIIESSKKKWQIVKSKNTRLIRKTFYFVKFCIEQLSLGIFGGIINIPRIITQLLFESTKQIRDKSIYKNEETQEKINKKKNTIYLISTIKKFKSNKKKISYDLCSLSQAYVFYKLSQLQVSNFSKLRAVLEYNICVTSLFVKNQIKDFFQEHGIFHYKLKEKTFLNSESNQWKNWLRSHYQYNLPEIVWARLVTEKWKNKINQDSLVLNQSLNKEDSYEKNQFDNYKKLNSFEADSLLNPKQNLKKDYIYNLFCYNSINSKETIFDMPLDIIIDNFLVSSFRGKSNIRGIGKFRTRKFLDWRILTFWFIKKVNIESAVDTTSKKKNIQTQAQNSERIHKITKTGLANQKKDFFDWMGMNEEILNYPIANFDFLFFPEFVLFSSTYKIKPWVIPIKLLLFNFNEKKTVNKKITRNQNVFIPSNETKNLRFYNLTKESADQGELESDNEKQRNPELALPNQEKNIEENYAESKIKKPENKKQYKPNTEVELDLFLTRYSRFQLRWNFFLNTKILNNIKIYCLLVRLKNPNEIAISSIERAEMNLDLLMIEKNFTFAKLMKKGILIIEPLRLSVKNDGQLIIYRTIGISLVHKNNHQISQREKKKIEKAITKYKKKTVNRKKKNSDFFAPENLLSPKRRREFRILICSKFKTKSTRYRNSRFDKNIQNCGQVLNQKKDLDKDKTNLMKLKFFLWPNFRLEDLACMNRYWFNTNNGNHFSMIRIHMYTRLKINS.

6 helical membrane-spanning segments follow: residues 19–39, 68–88, 91–111, 133–153, 176–196, and 230–250; these read IINSVVVVGLYYGFLTTFSIG, FIAGQLMMFISIYYAPLHLAL, PHTITVLALPYLLFHFFWNNH, VFLNNLIFQLFNHFILPSSML, VGWLIGHILFMKWVGLVLVWI, and IFSILLFITCVYYLGRIPSPI. Over residues 257 to 271 the composition is skewed to basic and acidic residues; the sequence is GTSETEERGGTKQDQ. 2 disordered regions span residues 257–278 and 1498–1521; these read GTSETEERGGTKQDQEVSTEEA and ADQGELESDNEKQRNPELALPNQE.

Belongs to the TIC214 family. Part of the Tic complex.

Its subcellular location is the plastid. It is found in the chloroplast inner membrane. In terms of biological role, involved in protein precursor import into chloroplasts. May be part of an intermediate translocation complex acting as a protein-conducting channel at the inner envelope. This chain is Protein TIC 214, found in Aethionema grandiflorum (Persian stone-cress).